The primary structure comprises 185 residues: MASPWPVWTLSWILILLAVLVPGAAADFNISSLSGLLSPVMTESLLVALPPCHLTGGNATLTVRRANDSKVVRSSFVVPPCRGRRELVSVVDSGSGFTVTRLSAYQVTNLAPGTKYYISYLVTKGASTESSREIPMSTFPRRKAESIGLAMARTGGMVVITVLLSVAMFLLVLGLIIALALGARK.

The signal sequence occupies residues 1-26 (MASPWPVWTLSWILILLAVLVPGAAA). Positions 27–85 (DFNISSLSGLLSPVMTESLLVALPPCHLTGGNATLTVRRANDSKVVRSSFVVPPCRGRR) are excised as a propeptide. N-linked (GlcNAc...) asparagine glycans are attached at residues Asn-29, Asn-58, and Asn-67. Residues 86 to 156 (ELVSVVDSGS…IGLAMARTGG (71 aa)) are Lumenal-facing. A helical transmembrane segment spans residues 157–177 (MVVITVLLSVAMFLLVLGLII). The Cytoplasmic portion of the chain corresponds to 178–185 (ALALGARK).

The protein belongs to the uroplakin-2 family. As to quaternary structure, interacts with uroplakin-1a (UPK1A). Bladder epithelium.

It is found in the cell membrane. Its function is as follows. Component of the asymmetric unit membrane (AUM); a highly specialized biomembrane elaborated by terminally differentiated urothelial cells. May play an important role in regulating the assembly of the AUM. This chain is Uroplakin-2 (UPK2), found in Bos taurus (Bovine).